Consider the following 256-residue polypeptide: Nickel import ATP-binding protein NikD (256 aa).

The 240-residue stretch at 6-245 folds into the ABC transporter domain; it reads LEIRGLRIET…PASATARTLL (240 aa). Residue 38-45 coordinates ATP; the sequence is GASGSGKS.

The protein belongs to the ABC transporter superfamily. Nickel importer (TC 3.A.1.5.3) family. In terms of assembly, the complex is composed of two ATP-binding proteins (NikD and NikE), two transmembrane proteins (NikB and NikC) and a solute-binding protein (NikA).

It is found in the cell inner membrane. The enzyme catalyses Ni(2+)(out) + ATP + H2O = Ni(2+)(in) + ADP + phosphate + H(+). Part of the ABC transporter complex NikABCDE involved in nickel import. Responsible for energy coupling to the transport system. In Pseudomonas putida (strain ATCC 47054 / DSM 6125 / CFBP 8728 / NCIMB 11950 / KT2440), this protein is Nickel import ATP-binding protein NikD.